Here is a 301-residue protein sequence, read N- to C-terminus: Mitochondrial import receptor subunit TOM40 homolog (301 aa).

Residues Met-1–Ser-20 are disordered.

It belongs to the Tom40 family. As to quaternary structure, forms part of the preprotein translocase complex of the outer mitochondrial membrane (TOM complex). Interacts with mitochondrial targeting sequences.

It localises to the mitochondrion outer membrane. Channel-forming protein essential for import of protein precursors into mitochondria. Specifically required for nnt-1 accumulation in the mitochondria and may be involved in the secretion of daf-28/insulin from the mitochondria. Required for embryonic and larval development. This Caenorhabditis briggsae protein is Mitochondrial import receptor subunit TOM40 homolog.